The sequence spans 284 residues: Bifunctional protein FolD (284 aa).

NADP(+) contacts are provided by residues 163 to 165 and Ser188; that span reads GRS.

The protein belongs to the tetrahydrofolate dehydrogenase/cyclohydrolase family. Homodimer.

It catalyses the reaction (6R)-5,10-methylene-5,6,7,8-tetrahydrofolate + NADP(+) = (6R)-5,10-methenyltetrahydrofolate + NADPH. The catalysed reaction is (6R)-5,10-methenyltetrahydrofolate + H2O = (6R)-10-formyltetrahydrofolate + H(+). The protein operates within one-carbon metabolism; tetrahydrofolate interconversion. In terms of biological role, catalyzes the oxidation of 5,10-methylenetetrahydrofolate to 5,10-methenyltetrahydrofolate and then the hydrolysis of 5,10-methenyltetrahydrofolate to 10-formyltetrahydrofolate. This chain is Bifunctional protein FolD, found in Lactococcus lactis subsp. lactis (strain IL1403) (Streptococcus lactis).